Here is a 194-residue protein sequence, read N- to C-terminus: Phosphoprotein p30 (194 aa).

It belongs to the asfivirus phosphoprotein p30 family. Oligomer. Interacts with host HNRNPK. Post-translationally, phosphorylated on serine residues in the 115 N-terminal amino acids.

The protein resides in the host cytoplasm. It is found in the host nucleus. Its subcellular location is the virion. Modifies the subcellular distribution of heterogeneous nuclear ribonucleoprotein K (HNRNPK) and may contribute to modulate HNRNPK functions related to processing and export of mRNAs during ASFV infection. Necessary for virus internalization. This Ornithodoros (relapsing fever ticks) protein is Phosphoprotein p30.